The primary structure comprises 522 residues: ATP synthase subunit alpha (522 aa).

Residue 176–183 participates in ATP binding; the sequence is GDRQTGKT.

It belongs to the ATPase alpha/beta chains family. As to quaternary structure, F-type ATPases have 2 components, CF(1) - the catalytic core - and CF(0) - the membrane proton channel. CF(1) has five subunits: alpha(3), beta(3), gamma(1), delta(1), epsilon(1). CF(0) has four main subunits: a(1), b(1), b'(1) and c(9-12).

Its subcellular location is the cell membrane. The enzyme catalyses ATP + H2O + 4 H(+)(in) = ADP + phosphate + 5 H(+)(out). Produces ATP from ADP in the presence of a proton gradient across the membrane. The alpha chain is a regulatory subunit. This Chloroflexus aurantiacus (strain ATCC 29366 / DSM 635 / J-10-fl) protein is ATP synthase subunit alpha.